Reading from the N-terminus, the 1125-residue chain is Tip elongation aberrant protein 3 (1125 aa).

Kelch repeat units lie at residues 73 to 123 (FMYL…CSAD), 124 to 179 (TIYL…LVDS), 181 to 226 (LWIF…KANM), 259 to 308 (KIFV…TIDD), and 310 to 360 (VYIY…SKNN). Serine 430, serine 437, serine 460, serine 523, serine 980, serine 982, serine 983, serine 984, serine 1078, and serine 1080 each carry phosphoserine. A disordered region spans residues 507-530 (PLPNGNDTISRSSESSSPINESES). The segment covering 515–530 (ISRSSESSSPINESES) has biased composition (low complexity).

It localises to the cell tip. In terms of biological role, acts as a cell end marker required for efficient new end take-off (NETO), whereby growth is activated at the cell end to generate bipolarity in extending cells. Also required for proper placement of the septum. The sequence is that of Tip elongation aberrant protein 3 (tea3) from Schizosaccharomyces pombe (strain 972 / ATCC 24843) (Fission yeast).